A 697-amino-acid chain; its full sequence is MTTSHILSAVDPTTGLSGNVSGGGGGGGAGGGAGSGSPQHVTHNGHGHGHGLGGVAAVSGGGASVSGNGGHRVVGGAGSPNELDRNLRISLDDRELWLRFQNLTNEMIVTKNGRRMFPVVKISASGLDPAAMYTVLLEFVQIDSHRWKYVNGEWVPGGKAEVPPSNPIYVHPESPNFGAHWMKEPISFAKVKLTNKTNGNGQIMLNSLHKYEPRVHLVRVGSEQRHVVTYPFPETQFIAVTAYQNEEVTSLKIKYNPFAKAFLDAKERPDTLYPHDTHYGWLIPPPTHYTAAAAAVAAPPPLSIAQSHGLVASCPSVSSAESVGPSSGGSCDRYGRSLSSRSVAPTRTTPYSRPRVVSGSGSNGSAGNASSTSPQPPSAPQTPTSLHSTSTGSVSTSVSSSSGGGIGSAPSTGCFSSSYAQSGFMSVDASPTASVFSYPSSWQSNGNYWNATSVPGPMPMNVCSGRNISSHNSPSPTNGSPSYTTSSPSYTIHHLTPHSHQYNMAQTDIYGTGVGVGGGAGTTGSPQAAYGAAAHQVYHPTPTSPTHQLYTNAVLNAPSALSYSASGWHNGSGAEYGLYQNAAAAYYQPEYIPLEIGYATHPLEPVDVSKTLDDPQAAMYKPSDEQGSVITLECASSSLKSSHDIKIESSSLEHAGERGTVGGGAAVVSVPTAVVNGAPAVAADTWTPLTPPQSTLQ.

The tract at residues 1 to 60 (MTTSHILSAVDPTTGLSGNVSGGGGGGGAGGGAGSGSPQHVTHNGHGHGHGLGGVAAVSG) is disordered. Composition is skewed to gly residues over residues 20-35 (VSGG…GAGS) and 50-60 (HGLGGVAAVSG). Residues 96–264 (LWLRFQNLTN…YNPFAKAFLD (169 aa)) constitute a DNA-binding region (T-box). Positions 316–330 (SVSSAESVGPSSGGS) are enriched in low complexity. 2 disordered regions span residues 316–407 (SVSS…GGIG) and 462–488 (VCSG…TSSP). Over residues 337-351 (SLSSRSVAPTRTTPY) the composition is skewed to polar residues. Composition is skewed to low complexity over residues 352–373 (SRPR…SSTS), 381–401 (QTPT…VSSS), and 469–488 (SSHN…TSSP).

The protein resides in the nucleus. Functionally, required for the specification of the hindgut and anal pads. This chain is T-related protein (byn), found in Drosophila melanogaster (Fruit fly).